Here is a 515-residue protein sequence, read N- to C-terminus: Sugar transport protein MST4 (515 aa).

Over 1–17 (MAGGFSVSGSGVEFEAK) the chain is Cytoplasmic. Residues 18 to 38 (ITPIVIISCIMAATGGLMFGY) form a helical membrane-spanning segment. Residues 39–78 (DVGISGGVTSMDDFLREFFPTVLKKKHEDKESNYCKYDNQ) lie on the Extracellular side of the membrane. The helical transmembrane segment at 79-99 (GLQLFTSSLYLAGLTATFFAS) threads the bilayer. The Cytoplasmic portion of the chain corresponds to 100-108 (YTTRRLGRR). A helical transmembrane segment spans residues 109–129 (LTMLIAGVFFIVGVIFNGAAQ). Over 130 to 138 (NLAMLIVGR) the chain is Extracellular. The chain crosses the membrane as a helical span at residues 139–159 (ILLGCGVGFANQAVPLFLSEI). Over 160–165 (APTRIR) the chain is Cytoplasmic. The chain crosses the membrane as a helical span at residues 166 to 186 (GGLNILFQLNVTIGILFANLV). Residues 187 to 199 (NYGTAKIHPWGWR) are Extracellular-facing. The chain crosses the membrane as a helical span at residues 200-220 (LSLSLAGIPAALLTLGALFVV). Residues 221–280 (DTPNSLIERGRLEEGKAVLRKIRGTDNVEPEFNEIVEASRVAQEVKHPFRNLLQRRNRPQ) lie on the Cytoplasmic side of the membrane. A helical transmembrane segment spans residues 281-301 (LVIAVLLQIFQQFTGINAIMF). The Extracellular segment spans residues 302 to 315 (YAPVLFNTLGFKTD). The chain crosses the membrane as a helical span at residues 316–336 (ASLYSAVITGAVNVLSTLVSV). The Cytoplasmic portion of the chain corresponds to 337–347 (YSVDRVGRRML). A helical membrane pass occupies residues 348 to 368 (LLEAGVQMFLSQVAIAVVLGI). At 369–379 (KVTDRSDNLGH) the chain is on the extracellular side. A helical transmembrane segment spans residues 380-400 (GWAIMVVVMVCTFVSSFAWSW). The Cytoplasmic portion of the chain corresponds to 401-422 (GPLGWLIPSETFPLETRSAGQS). A helical membrane pass occupies residues 423 to 443 (VTVCVNLLFTFVIAQAFLSML). The Extracellular segment spans residues 444 to 448 (CHLKY). The helical transmembrane segment at 449–469 (AIFAFFSAWVVVMSLFVLFFL) threads the bilayer. The Cytoplasmic segment spans residues 470–515 (PETKNIPIEEMTERVWKQHWFWKRFMDDADKHHVVPNGGKSNGATV).

The protein belongs to the major facilitator superfamily. Sugar transporter (TC 2.A.1.1) family. Expressed in roots, shoots, leaf blades, leaf sheaths, anthers, ovaries and embryos.

It localises to the membrane. Functionally, mediates active uptake of hexoses by sugar:proton symport. Can transport glucose, fructose, mannose and galactose. Can transport xylose and ribose. The protein is Sugar transport protein MST4 of Oryza sativa subsp. japonica (Rice).